A 139-amino-acid polypeptide reads, in one-letter code: Sec-independent protein translocase protein TatB (139 aa).

The helical transmembrane segment at 1-21 (MFDMGFLELMLIGVVALLVLG) threads the bilayer. A compositionally biased stretch (basic and acidic residues) spans 66–86 (QQRKLDAGLGKVRDEVERHGD). The tract at residues 66-139 (QQRKLDAGLG…APSAKDSNAP (74 aa)) is disordered.

Belongs to the TatB family. In terms of assembly, the Tat system comprises two distinct complexes: a TatABC complex, containing multiple copies of TatA, TatB and TatC subunits, and a separate TatA complex, containing only TatA subunits. Substrates initially bind to the TatABC complex, which probably triggers association of the separate TatA complex to form the active translocon.

It localises to the cell inner membrane. Its function is as follows. Part of the twin-arginine translocation (Tat) system that transports large folded proteins containing a characteristic twin-arginine motif in their signal peptide across membranes. Together with TatC, TatB is part of a receptor directly interacting with Tat signal peptides. TatB may form an oligomeric binding site that transiently accommodates folded Tat precursor proteins before their translocation. The sequence is that of Sec-independent protein translocase protein TatB from Chromohalobacter salexigens (strain ATCC BAA-138 / DSM 3043 / CIP 106854 / NCIMB 13768 / 1H11).